Consider the following 357-residue polypeptide: Dihydroorotate dehydrogenase (quinone) (357 aa).

FMN is bound by residues 67–71 (AGFDK) and threonine 91. Lysine 71 is a binding site for substrate. 116–120 (NRMGF) contacts substrate. FMN-binding residues include asparagine 153 and asparagine 186. Asparagine 186 lines the substrate pocket. Serine 189 serves as the catalytic Nucleophile. Position 191 (asparagine 191) interacts with substrate. Positions 228 and 256 each coordinate FMN. 257-258 (NT) serves as a coordination point for substrate. Residues glycine 282, glycine 311, and 332-333 (YT) contribute to the FMN site.

The protein belongs to the dihydroorotate dehydrogenase family. Type 2 subfamily. In terms of assembly, monomer. FMN serves as cofactor.

The protein resides in the cell membrane. It carries out the reaction (S)-dihydroorotate + a quinone = orotate + a quinol. It participates in pyrimidine metabolism; UMP biosynthesis via de novo pathway; orotate from (S)-dihydroorotate (quinone route): step 1/1. Functionally, catalyzes the conversion of dihydroorotate to orotate with quinone as electron acceptor. This Arthrobacter sp. (strain FB24) protein is Dihydroorotate dehydrogenase (quinone).